Consider the following 602-residue polypeptide: T-box transcription factor TBX15 (602 aa).

The tract at residues 46-84 (ALSPAGPLGDTEDAAAHGLEPHPDSEQSTGSDSEVLTER) is disordered. A compositionally biased stretch (polar residues) spans 71–84 (EQSTGSDSEVLTER). A DNA-binding region (T-box) is located at residues 122 to 304 (LWKRFHDIGT…RNPFAKGFRD (183 aa)). Thr-330 is modified (phosphothreonine). 2 disordered regions span residues 338–369 (QKQQGGSTGTSPTTSSTGTPSPSASSHLLSPS) and 425–447 (QSGTTSATQPSETFMPQRTPSLI). The span at 346-369 (GTSPTTSSTGTPSPSASSHLLSPS) shows a compositional bias: low complexity. Positions 425–446 (QSGTTSATQPSETFMPQRTPSL) are enriched in polar residues.

In terms of assembly, can form a heterodimer with TBX18.

The protein localises to the nucleus. Probable transcriptional regulator involved in the development of the skeleton of the limb, vertebral column and head. Acts by controlling the number of mesenchymal precursor cells and chondrocytes. The protein is T-box transcription factor TBX15 (TBX15) of Homo sapiens (Human).